We begin with the raw amino-acid sequence, 1696 residues long: Proprotein convertase subtilisin/kexin type 5 (1696 aa).

The first 25 residues, M1–A25, serve as a signal peptide directing secretion. The propeptide occupies D26–R110. Residues R111 to E488 form a catalytic region. The Extracellular portion of the chain corresponds to R111 to Y1618. In terms of domain architecture, Peptidase S8 spans Q167–V487. Catalysis depends on charge relay system residues D192 and H233. An N-linked (GlcNAc...) asparagine glycan is attached at N246. The active-site Charge relay system is S407. The P/Homo B domain occupies R495–H638. An N-linked (GlcNAc...) asparagine glycan is attached at N529. Basic and acidic residues predominate over residues R643–E657. Residues R643–D666 form a disordered region. Positions C664–C1649 are CRM (Cys-rich motif). N885 is a glycosylation site (N-linked (GlcNAc...) asparagine). The helical transmembrane segment at I1619 to M1639 threads the bilayer. Topologically, residues L1640 to H1696 are cytoplasmic.

Belongs to the peptidase S8 family.

The protein localises to the secreted. It localises to the cell membrane. In terms of biological role, serine endoprotease that processes various proproteins by cleavage at paired basic amino acids, recognizing the RXXX[KR]R consensus motif. Likely functions in the constitutive and regulated secretory pathways. This is Proprotein convertase subtilisin/kexin type 5 (PC6) from Branchiostoma californiense (California lancelet).